Reading from the N-terminus, the 448-residue chain is Fibulin-5 (448 aa).

The signal sequence occupies residues 1–23 (MPGFKRILTVTVLALCLPTPGNA). The EGF-like 1; calcium-binding domain occupies 42-82 (DVDECRTIPEACRGDMMCVNQNGGYLCIPRTNPVYRGPYSN). 17 cysteine pairs are disulfide-bonded: C46–C59, C53–C68, C131–C144, C138–C153, C155–C166, C172–C181, C177–C190, C192–C205, C211–C221, C217–C230, C232–C245, C251–C262, C258–C271, C273–C286, C292–C305, C299–C314, and C320–C332. A Cell attachment site motif is present at residues 54-56 (RGD). An EGF-like 2; calcium-binding domain is found at 127 to 167 (DVDECATDSHQCNPTQICINTEGGYTCSCTDGYWLLEGQCL). Residues 168 to 206 (DIDECRYGYCQQLCANVPGSYSCTCNPGFTLNEDGRSCQ) form the EGF-like 3; calcium-binding domain. Residues 207–246 (DVNECATENPCVQTCVNTYGSFICRCDPGYELEDDGVHCS) enclose the EGF-like 4; calcium-binding domain. The interaction with LOXL1 stretch occupies residues 245-448 (CSDMDECSFS…LRIYVSQYPF (204 aa)). Residues 247-287 (DMDECSFSEFLCQHECVNQPGTYFCSCPAGYILLDDNRSCQ) form the EGF-like 5; calcium-binding domain. N-linked (GlcNAc...) asparagine glycans are attached at residues N283 and N296. The EGF-like 6; calcium-binding domain maps to 288–333 (DINECEHRNHTCILQQTCYNLQGGFKCIDPIRCEEPYLRISDNRCM).

Belongs to the fibulin family. In terms of assembly, homodimer. Monomer, homodimerizes in presence of Ca(2+). Interacts with ELN. Interacts (via N-terminus) with the integrins ITGAV/ITGB3, ITGAV/ITGB5 and ITGA9/ITGB1. Interacts with FBN1 (via N-terminal domain). Forms a ternary complex with ELN and FBN1. Interacts with EFEMP2 with moderate affinity. Interacts with LOXL1. In terms of processing, N-glycosylated.

The protein localises to the secreted. The protein resides in the extracellular space. It is found in the extracellular matrix. In terms of biological role, essential for elastic fiber formation, is involved in the assembly of continuous elastin (ELN) polymer and promotes the interaction of microfibrils and ELN. Stabilizes and organizes elastic fibers in the skin, lung and vasculature. Promotes adhesion of endothelial cells through interaction of integrins and the RGD motif. Vascular ligand for integrin receptors which may play a role in vascular development and remodeling. May act as an adapter that mediates the interaction between FBN1 and ELN. The chain is Fibulin-5 (FBLN5) from Bos taurus (Bovine).